Reading from the N-terminus, the 434-residue chain is MKRSISPDPFSSTKSPKLVHHSPDDGGAEGNPYRLPFTLSDENLSCLPISQAREPPPIFNLDPNSVKDTQDRNKLYLAKAWDLLKPAIKIILDDDEYKKPGDVLCFTTIFRAVKRACLGDPRQSELVFNLVKHECEPHIAELIQSLEKNCSGSDDPSVFLPHVYNRWLDFKRKMSLVSDVAMYQTLNGLTLWDVGQKLFHKQLSMAPQLQDQVITGILRLITDERLGKAANNTSDLLKNLMDMFRMQWQCTYVYKDPFLDSTSKFYAEEAEQVLQRSDISHYLKYVERTFLAEEEKCDKHYFFFSSSRSRLMKVLKSQLLEAHSSFLEEGFMLLMDESLIDDLRRMYRLFSMVDSEDYIDRILRAYILAKGEGARQEGSLQELHTSIDKIWHQCFGQDDLLDKTIRDCFEGFGLHVPGEFSDQLQWIDDDDDED.

Residues 1 to 34 are disordered; sequence MKRSISPDPFSSTKSPKLVHHSPDDGGAEGNPYR.

The protein belongs to the cullin family.

The polypeptide is Cullin-like protein 5 (Arabidopsis thaliana (Mouse-ear cress)).